The following is a 182-amino-acid chain: MSVDVTNETQWVIDPKVFSDLGIWVLDQMRVSTQSDLTIMFVDPDPIAELHMRWMNLEGPTDVMSFPMDELRPGDGKTVMEGVLGDIVICPWVAAQQAAAAGHSTMQEMLLLTIHGILHLLGYDHVTPEQERQMFGLQRQLLLTFFALRHDANVQATLPAGTPDALALYDAAHGAGRDLDSK.

Zn(2+) contacts are provided by His-115, His-119, and His-125.

The protein belongs to the endoribonuclease YbeY family. Requires Zn(2+) as cofactor.

It is found in the cytoplasm. Functionally, single strand-specific metallo-endoribonuclease involved in late-stage 70S ribosome quality control and in maturation of the 3' terminus of the 16S rRNA. The protein is Endoribonuclease YbeY of Bifidobacterium longum (strain NCC 2705).